A 124-amino-acid chain; its full sequence is Glycine cleavage system H protein (124 aa).

Positions 22-104 (KAKVGITDFA…YENGYLFIIE (83 aa)) constitute a Lipoyl-binding domain. Residue Lys63 is modified to N6-lipoyllysine.

The protein belongs to the GcvH family. The glycine cleavage system is composed of four proteins: P, T, L and H. Requires (R)-lipoate as cofactor.

Functionally, the glycine cleavage system catalyzes the degradation of glycine. The H protein shuttles the methylamine group of glycine from the P protein to the T protein. In Endomicrobium trichonymphae, this protein is Glycine cleavage system H protein.